The sequence spans 431 residues: Inactive polypeptide N-acetylgalactosaminyltransferase-like protein 5 (431 aa).

Residues M1–V4 lie on the Cytoplasmic side of the membrane. The chain crosses the membrane as a helical; Signal-anchor for type II membrane protein span at residues I5–L27. The Lumenal segment spans residues H28–F431. The N-linked (GlcNAc...) asparagine glycan is linked to N68. Disulfide bonds link C105–C336 and C327–C403. The interval L114 to A224 is catalytic subdomain A. The interval P282 to K344 is catalytic subdomain B. N-linked (GlcNAc...) asparagine glycans are attached at residues N353 and N390.

Belongs to the glycosyltransferase 2 family. GalNAc-T subfamily. The cofactor is Mn(2+). In terms of tissue distribution, expressed in testis. Mainly expressed in the round and elongated spermatids during spermiogenesis, not in the outermost cells of the seminiferous tubules, which contain spermatogonia and somatic Sertoli cells. Present in the juxtanuclear space in the round spermatids, not in the acrosomal vesicles. In the elongating spermatids, localizes strongly in the acroplaxome, the region between the developing acrosome and nucleus. During differentiation, also weakly detected in the transient manchette containing microtubules. In epididymal spermatozoa, weakly detected in the midpiece, but concentrates mainly in the neck region around the head-tail coupling apparatus (at protein level).

The protein localises to the late endosome membrane. Functionally, probable inactive glycosyltransferase required during spermatid development. May participate in protein loading into the acrosomes and accumulation of ubiquitin-proteasome systems around the head-tail coupling apparatus region. This is Inactive polypeptide N-acetylgalactosaminyltransferase-like protein 5 (Galntl5) from Mus musculus (Mouse).